The following is a 747-amino-acid chain: MAAGVLPQNEDPYSTLVNSSGHAAHMDENSGRPAPKYTKVGERLRHVIPGHMACSMACGGRACKYENPARWSEQEQAIKGVYSSWVTDNILAMARPSSELLEKYRIIEQFLGQGIKTIINLQRPGEHASCGSALEQESGFTYLPEAFMEAGIYFYNFGWKDYGVASLTAILDMVKVMTFALQEGKVAVHCHAGLGRTGVLIACYLVFATRMTADQAIIFVRAKRPNSIQTRGQLLCVREFTQFLAPLRNIFSCCDPKAHAVTLAQYLIRQRHLLHGYEARLLKYVPKIIHLVCKLLLDLAENRPVVMKSMLEGPVLSAEIEKTVSEMVTLQLDQELLRQNSDVPDPFNPTAEVAEFENQDVILSTEQEFDPLWKRRDIECLQPLTHLKRQLSYSDSDLKRAKAILEQGETPWTVPAQELLDHSLQHQKPTSHCYMPPTPELGFNKEALVQNTFSFWTPSKCGGLEGLKDEGSLLLCRKDIPKEVQRSRTFSVGVSCSHNPGEPVPPNFTSIHKDPEQVTHCRCEAPGGWVPGPVHEMVRSPCSPLNCGSSPKAQFPHGQETQDSTDLSEAVPHAGLQPELSAEARRILAAKALANLNEFVEKEEVKRKVEMWQKELNSREEAWERICGERDPFILCSLMWSWVEQLKEPVITKEDVDMLVDRQADAAEALFLLEKGQYQTILCVLHCIVSLQTLPMEVEEACLLHAIKAFTKVNFDSENGPIVYDTLKKIFKHTLEEKRKMAKDSLS.

Residues methionine 1 to lysine 36 are disordered. The segment covering aspartate 11–glycine 21 has biased composition (polar residues). Residues tyrosine 82–cysteine 253 form the Tyrosine-protein phosphatase domain. Cysteine 190 acts as the Phosphocysteine intermediate in catalysis. Residues serine 392, serine 394, and serine 543 each carry the phosphoserine modification. Positions serine 549–alanine 570 are disordered.

Belongs to the protein-tyrosine phosphatase family. Non-receptor class PTPDC1 subfamily.

In terms of biological role, may play roles in cilia formation and/or maintenance. The sequence is that of Protein tyrosine phosphatase domain-containing protein 1 (Ptpdc1) from Mus musculus (Mouse).